The primary structure comprises 353 residues: Beta-hexosaminidase (353 aa).

Residues Asp-74, Arg-82, Arg-149, and 179–180 each bind substrate; that span reads KH. His-192 functions as the Proton donor/acceptor in the catalytic mechanism. Residue Asp-263 is the Nucleophile of the active site.

This sequence belongs to the glycosyl hydrolase 3 family. NagZ subfamily.

The protein resides in the cytoplasm. The enzyme catalyses Hydrolysis of terminal non-reducing N-acetyl-D-hexosamine residues in N-acetyl-beta-D-hexosaminides.. It functions in the pathway cell wall biogenesis; peptidoglycan recycling. Its function is as follows. Plays a role in peptidoglycan recycling by cleaving the terminal beta-1,4-linked N-acetylglucosamine (GlcNAc) from peptide-linked peptidoglycan fragments, giving rise to free GlcNAc, anhydro-N-acetylmuramic acid and anhydro-N-acetylmuramic acid-linked peptides. This is Beta-hexosaminidase from Bordetella bronchiseptica (strain ATCC BAA-588 / NCTC 13252 / RB50) (Alcaligenes bronchisepticus).